We begin with the raw amino-acid sequence, 513 residues long: Maturase K (513 aa).

It belongs to the intron maturase 2 family. MatK subfamily.

Its subcellular location is the plastid. It localises to the chloroplast. In terms of biological role, usually encoded in the trnK tRNA gene intron. Probably assists in splicing its own and other chloroplast group II introns. The polypeptide is Maturase K (Phragmites australis (Common reed)).